Here is a 447-residue protein sequence, read N- to C-terminus: Probable glycine dehydrogenase (decarboxylating) subunit 1 (447 aa).

This sequence belongs to the GcvP family. N-terminal subunit subfamily. In terms of assembly, the glycine cleavage system is composed of four proteins: P, T, L and H. In this organism, the P 'protein' is a heterodimer of two subunits.

The enzyme catalyses N(6)-[(R)-lipoyl]-L-lysyl-[glycine-cleavage complex H protein] + glycine + H(+) = N(6)-[(R)-S(8)-aminomethyldihydrolipoyl]-L-lysyl-[glycine-cleavage complex H protein] + CO2. The glycine cleavage system catalyzes the degradation of glycine. The P protein binds the alpha-amino group of glycine through its pyridoxal phosphate cofactor; CO(2) is released and the remaining methylamine moiety is then transferred to the lipoamide cofactor of the H protein. This chain is Probable glycine dehydrogenase (decarboxylating) subunit 1, found in Bacillus cytotoxicus (strain DSM 22905 / CIP 110041 / 391-98 / NVH 391-98).